The following is a 502-amino-acid chain: 4,4'-diapophytoene desaturase (4,4'-diaponeurosporene-forming) (502 aa).

An FAD-binding site is contributed by 5–17 (VIGAGVTGLAAAA).

It belongs to the carotenoid/retinoid oxidoreductase family. CrtN subfamily.

It carries out the reaction 15-cis-4,4'-diapophytoene + 3 FAD + 3 H(+) = all-trans-4,4'-diaponeurosporene + 3 FADH2. It participates in carotenoid biosynthesis; staphyloxanthin biosynthesis; staphyloxanthin from farnesyl diphosphate: step 2/5. In terms of biological role, involved in the biosynthesis of the yellow-orange carotenoid staphyloxanthin, which plays a role in the virulence via its protective function against oxidative stress. Catalyzes three successive dehydrogenation reactions that lead to the introduction of three double bonds into 4,4'-diapophytoene (dehydrosqualene), with 4,4'-diapophytofluene and 4,4'-diapo-zeta-carotene as intermediates, and 4,4'-diaponeurosporene (the major deep-yellow pigment in staphylococci strains) as the end product. This is 4,4'-diapophytoene desaturase (4,4'-diaponeurosporene-forming) from Staphylococcus aureus (strain USA300).